Reading from the N-terminus, the 28-residue chain is Fibrinogen alpha chain (28 aa).

Serine 3 is modified (phosphoserine).

In terms of assembly, heterohexamer; disulfide linked. Contains 2 sets of 3 non-identical chains (alpha, beta and gamma). The 2 heterotrimers are in head to head conformation with the N-termini in a small central domain. In terms of processing, conversion of fibrinogen to fibrin is triggered by thrombin, which cleaves fibrinopeptides A and B from alpha and beta chains, and thus exposes the N-terminal polymerization sites responsible for the formation of the soft clot. The soft clot is converted into the hard clot by factor XIIIA which catalyzes the epsilon-(gamma-glutamyl)lysine cross-linking between gamma chains (stronger) and between alpha chains (weaker) of different monomers. Post-translationally, forms F13A-mediated cross-links between a glutamine and the epsilon-amino group of a lysine residue, forming fibronectin-fibrinogen heteropolymers.

The protein resides in the secreted. In terms of biological role, cleaved by the protease thrombin to yield monomers which, together with fibrinogen beta (FGB) and fibrinogen gamma (FGG), polymerize to form an insoluble fibrin matrix. Fibrin has a major function in hemostasis as one of the primary components of blood clots. In addition, functions during the early stages of wound repair to stabilize the lesion and guide cell migration during re-epithelialization. Was originally thought to be essential for platelet aggregation, based on in vitro studies using anticoagulated blood. However, subsequent studies have shown that it is not absolutely required for thrombus formation in vivo. Enhances expression of SELP in activated platelets via an ITGB3-dependent pathway. Maternal fibrinogen is essential for successful pregnancy. Fibrin deposition is also associated with infection, where it protects against IFNG-mediated hemorrhage. May also facilitate the immune response via both innate and T-cell mediated pathways. This is Fibrinogen alpha chain (FGA) from Canis lupus familiaris (Dog).